The following is a 241-amino-acid chain: MRPSGRTAQQLRPLTFTRHYTKYAEGAVLVEFGETRVLCTATVEEGVPRFLKGQNKGWITAEYSMLPRSTHQRHARESVKGKQGGRTLEIQRLIARALRAAVDLTKLGEFTIKLDCDVLQADGGTRTAAITGACVALQDALQKMRVEGKLKSNPMKGLVAAVSVGVVGGESICDLEYIEDAIAETDMNVVMIEEGAGRKIIEIQGTAEGAPFSHQQLLELLALADDGIKTIFQAQKKVLEK.

Phosphate contacts are provided by residues Arg86 and 124-126 (GTR).

Belongs to the RNase PH family. Homohexameric ring arranged as a trimer of dimers.

It catalyses the reaction tRNA(n+1) + phosphate = tRNA(n) + a ribonucleoside 5'-diphosphate. Its function is as follows. Phosphorolytic 3'-5' exoribonuclease that plays an important role in tRNA 3'-end maturation. Removes nucleotide residues following the 3'-CCA terminus of tRNAs; can also add nucleotides to the ends of RNA molecules by using nucleoside diphosphates as substrates, but this may not be physiologically important. Probably plays a role in initiation of 16S rRNA degradation (leading to ribosome degradation) during starvation. The protein is Ribonuclease PH of Hamiltonella defensa subsp. Acyrthosiphon pisum (strain 5AT).